We begin with the raw amino-acid sequence, 98 residues long: MTMVYANIFLAFITSLMGLLMYRSHLMSSLLCLEGMMLSLFVMMTVTILNNHFTLASMTPIILLVFAACEAALGLSLLVMVSNTYGTDYVQNLNLLQC.

The next 3 membrane-spanning stretches (helical) occupy residues 1–21, 29–49, and 61–81; these read MTMVYANIFLAFITSLMGLLM, SLLCLEGMMLSLFVMMTVTIL, and IILLVFAACEAALGLSLLVMV.

The protein belongs to the complex I subunit 4L family. Core subunit of respiratory chain NADH dehydrogenase (Complex I) which is composed of 45 different subunits.

Its subcellular location is the mitochondrion inner membrane. The enzyme catalyses a ubiquinone + NADH + 5 H(+)(in) = a ubiquinol + NAD(+) + 4 H(+)(out). Its function is as follows. Core subunit of the mitochondrial membrane respiratory chain NADH dehydrogenase (Complex I) which catalyzes electron transfer from NADH through the respiratory chain, using ubiquinone as an electron acceptor. Part of the enzyme membrane arm which is embedded in the lipid bilayer and involved in proton translocation. The sequence is that of NADH-ubiquinone oxidoreductase chain 4L (MT-ND4L) from Leptonychotes weddellii (Weddell seal).